Consider the following 68-residue polypeptide: Small proline-rich protein 2K (68 aa).

A 1; truncated repeat occupies 21–26 (PKPCSP). Residues 21–65 (PKPCSPPKCPEPCPPPKCPETCPPQPCQRKCPPVLEAPCQQKCPS) are 3.5 X 9 AA approximate tandem repeats. A run of 3 repeats spans residues 27–35 (PKCPEPCPP), 36–44 (PKCPETCPP), and 45–53 (QPCQRKCPP).

This sequence belongs to the cornifin (SPRR) family. In terms of tissue distribution, not expressed in uterus.

The protein resides in the cytoplasm. Its function is as follows. Cross-linked envelope protein of keratinocytes. It is a keratinocyte protein that first appears in the cell cytosol, but ultimately becomes cross-linked to membrane proteins by transglutaminase. All that results in the formation of an insoluble envelope beneath the plasma membrane. The protein is Small proline-rich protein 2K (Sprr2k) of Mus musculus (Mouse).